A 239-amino-acid chain; its full sequence is Purine nucleoside phosphorylase DeoD-type (239 aa).

Residue H5 participates in a purine D-ribonucleoside binding. Phosphate contacts are provided by residues G21, R25, R44, and 88 to 91 (RVGS). A purine D-ribonucleoside is bound by residues 180–182 (EME) and 204–205 (SD). Catalysis depends on D205, which acts as the Proton donor.

The protein belongs to the PNP/UDP phosphorylase family. In terms of assembly, homohexamer; trimer of homodimers.

The catalysed reaction is a purine D-ribonucleoside + phosphate = a purine nucleobase + alpha-D-ribose 1-phosphate. It catalyses the reaction a purine 2'-deoxy-D-ribonucleoside + phosphate = a purine nucleobase + 2-deoxy-alpha-D-ribose 1-phosphate. In terms of biological role, catalyzes the reversible phosphorolytic breakdown of the N-glycosidic bond in the beta-(deoxy)ribonucleoside molecules, with the formation of the corresponding free purine bases and pentose-1-phosphate. This is Purine nucleoside phosphorylase DeoD-type from Yersinia pestis bv. Antiqua (strain Antiqua).